Reading from the N-terminus, the 453-residue chain is Phenolic glucoside malonyltransferase 1 (453 aa).

The Proton acceptor role is filled by His165. The short motif at 165–169 (HVAGD) is the HXXXD motif element. Malonyl-CoA contacts are provided by residues Lys254, His266, and 268-269 (TS). The active-site Proton acceptor is Asp394. Residues 394–398 (DFGWG) carry the DFGWG motif motif.

The protein belongs to the plant acyltransferase family. Phenolic glucoside malonyltransferase subfamily. In terms of assembly, monomer. Highly expressed in flower. Also expressed in flower bud, stem, root and leaf.

It catalyses the reaction a flavonol 3-O-beta-D-glucoside + malonyl-CoA = a flavonol 3-O-(6-O-malonyl-beta-D-glucoside) + CoA. The catalysed reaction is a flavonol 7-O-beta-D-glucoside + malonyl-CoA = a flavonol 7-O-(6-O-malonyl-beta-D-glucoside) + CoA. Functionally, malonyltransferase with broad substrate specificity acting on phenolic glucosides including xenobiotic naphthols. Has activity against flavonoid 7-O-glucosides, flavonoid 3-O-glucosides and naphthol glucosides, and to a lesser extent against coumarin glucosides in vitro. Prefers malonyl-CoA as an acyl donor, but also active with succinyl-CoA and methylmalonyl-CoA, but not with acetyl-CoA. The polypeptide is Phenolic glucoside malonyltransferase 1 (Nicotiana tabacum (Common tobacco)).